The sequence spans 465 residues: Kynurenine 3-monooxygenase (465 aa).

The segment at 1–26 (MSPGIVSQEVNGRQEPTEAARDERHG) is disordered. Residues 15 to 25 (EPTEAARDERH) are compositionally biased toward basic and acidic residues. 2 consecutive transmembrane segments (helical) span residues 405 to 427 (LLFR…SMPY) and 440 to 462 (LLKR…IYAQ).

This sequence belongs to the aromatic-ring hydroxylase family. KMO subfamily. FAD serves as cofactor.

The protein resides in the mitochondrion. Its subcellular location is the membrane. The enzyme catalyses L-kynurenine + NADPH + O2 + H(+) = 3-hydroxy-L-kynurenine + NADP(+) + H2O. Its pathway is cofactor biosynthesis; NAD(+) biosynthesis; quinolinate from L-kynurenine: step 1/3. In terms of biological role, catalyzes the hydroxylation of L-kynurenine (L-Kyn) to form 3-hydroxy-L-kynurenine (L-3OHKyn). Required for synthesis of quinolinic acid. This chain is Kynurenine 3-monooxygenase, found in Drosophila melanogaster (Fruit fly).